The chain runs to 316 residues: 4-hydroxy-3-methylbut-2-enyl diphosphate reductase (316 aa).

C12 contacts [4Fe-4S] cluster. (2E)-4-hydroxy-3-methylbut-2-enyl diphosphate-binding residues include H41 and H74. Positions 41 and 74 each coordinate dimethylallyl diphosphate. Residues H41 and H74 each contribute to the isopentenyl diphosphate site. [4Fe-4S] cluster is bound at residue C96. H124 is a (2E)-4-hydroxy-3-methylbut-2-enyl diphosphate binding site. Dimethylallyl diphosphate is bound at residue H124. H124 contacts isopentenyl diphosphate. E126 functions as the Proton donor in the catalytic mechanism. T169 contributes to the (2E)-4-hydroxy-3-methylbut-2-enyl diphosphate binding site. C199 is a [4Fe-4S] cluster binding site. 4 residues coordinate (2E)-4-hydroxy-3-methylbut-2-enyl diphosphate: S227, S228, N229, and S271. 4 residues coordinate dimethylallyl diphosphate: S227, S228, N229, and S271. Isopentenyl diphosphate contacts are provided by S227, S228, N229, and S271.

It belongs to the IspH family. Requires [4Fe-4S] cluster as cofactor.

It carries out the reaction isopentenyl diphosphate + 2 oxidized [2Fe-2S]-[ferredoxin] + H2O = (2E)-4-hydroxy-3-methylbut-2-enyl diphosphate + 2 reduced [2Fe-2S]-[ferredoxin] + 2 H(+). The catalysed reaction is dimethylallyl diphosphate + 2 oxidized [2Fe-2S]-[ferredoxin] + H2O = (2E)-4-hydroxy-3-methylbut-2-enyl diphosphate + 2 reduced [2Fe-2S]-[ferredoxin] + 2 H(+). It participates in isoprenoid biosynthesis; dimethylallyl diphosphate biosynthesis; dimethylallyl diphosphate from (2E)-4-hydroxy-3-methylbutenyl diphosphate: step 1/1. It functions in the pathway isoprenoid biosynthesis; isopentenyl diphosphate biosynthesis via DXP pathway; isopentenyl diphosphate from 1-deoxy-D-xylulose 5-phosphate: step 6/6. In terms of biological role, catalyzes the conversion of 1-hydroxy-2-methyl-2-(E)-butenyl 4-diphosphate (HMBPP) into a mixture of isopentenyl diphosphate (IPP) and dimethylallyl diphosphate (DMAPP). Acts in the terminal step of the DOXP/MEP pathway for isoprenoid precursor biosynthesis. The polypeptide is 4-hydroxy-3-methylbut-2-enyl diphosphate reductase (Xylella fastidiosa (strain M23)).